Consider the following 577-residue polypeptide: Arginine--tRNA ligase (577 aa).

Residues 122-132 (PNVAKEMHVGH) carry the 'HIGH' region motif.

This sequence belongs to the class-I aminoacyl-tRNA synthetase family. Monomer.

Its subcellular location is the cytoplasm. The enzyme catalyses tRNA(Arg) + L-arginine + ATP = L-arginyl-tRNA(Arg) + AMP + diphosphate. The polypeptide is Arginine--tRNA ligase (Escherichia coli O81 (strain ED1a)).